The following is a 274-amino-acid chain: Subtilisin DY (274 aa).

Q2 contributes to the Ca(2+) binding site. Residues 5-273 form the Peptidase S8 domain; the sequence is PYGIPLIKAD…KGLINVEAAA (269 aa). D32 serves as the catalytic Charge relay system. Ca(2+) is bound at residue D41. The active-site Charge relay system is the H63. The Ca(2+) site is built by L74, N76, V80, A168, Y170, and V173. S220 functions as the Charge relay system in the catalytic mechanism.

It belongs to the peptidase S8 family. Ca(2+) serves as cofactor.

It is found in the secreted. It catalyses the reaction Hydrolysis of proteins with broad specificity for peptide bonds, and a preference for a large uncharged residue in P1. Hydrolyzes peptide amides.. Functionally, subtilisin is an extracellular alkaline serine protease, it catalyzes the hydrolysis of proteins and peptide amides. In Bacillus licheniformis, this protein is Subtilisin DY (apr).